The primary structure comprises 577 residues: Guanine nucleotide-binding protein-like 3-like protein (577 aa).

Positions 1–30 (MMKIRHKNKKPGKGSKGCKKPARQNGKKVT) are enriched in basic residues. The tract at residues 1–75 (MMKIRHKNKK…VAREQERQRH (75 aa)) is disordered. A required for nucleolar localization region spans residues 9–28 (KKPGKGSKGCKKPARQNGKK). Over residues 42–75 (GNDHASREAELKKKRVEEMREKQQVAREQERQRH) the composition is skewed to basic and acidic residues. A coiled-coil region spans residues 43–103 (NDHASREAEL…QKEEVLQELN (61 aa)). One can recognise a CP-type G domain in the interval 118–304 (YKEFRKVVEY…LLDAPGIVPG (187 aa)). Residues 166–169 (NKID), 253–260 (GLPNVGKS), and 297–300 (DAPG) each bind GTP.

This sequence belongs to the TRAFAC class YlqF/YawG GTPase family. As to quaternary structure, interacts with MDM2; this interaction, which occurs in the nucleoplasm, stabilizes MDM2. Indirectly interacts with TP53, via MDM2-binding. Interacts with TERF1; this interaction probably occurs in the nucleoplasm and is increased during mitosis, when the nucleolus is disassembled. This binding may promote TERF1 homodimerization. Interacts with TERT.

The protein resides in the nucleus. The protein localises to the nucleolus. Stabilizes TERF1 telomeric association by preventing TERF1 recruitment by PML. Stabilizes TERF1 protein by preventing its ubiquitination and hence proteasomal degradation. Does so by interfering with TERF1-binding to FBXO4 E3 ubiquitin-protein ligase. Required for cell proliferation. By stabilizing TRF1 protein during mitosis, promotes metaphase-to-anaphase transition. Stabilizes MDM2 protein by preventing its ubiquitination, and hence proteasomal degradation. By acting on MDM2, may affect TP53 activity. Required for normal processing of ribosomal pre-rRNA. Binds GTP. In Mus musculus (Mouse), this protein is Guanine nucleotide-binding protein-like 3-like protein (Gnl3l).